The following is a 519-amino-acid chain: 2-isopropylmalate synthase (519 aa).

Residues valine 5–serine 267 form the Pyruvate carboxyltransferase domain. 4 residues coordinate Mn(2+): aspartate 14, histidine 202, histidine 204, and asparagine 238. The tract at residues lysine 392–valine 519 is regulatory domain.

This sequence belongs to the alpha-IPM synthase/homocitrate synthase family. LeuA type 1 subfamily. In terms of assembly, homodimer. Requires Mn(2+) as cofactor.

It localises to the cytoplasm. It catalyses the reaction 3-methyl-2-oxobutanoate + acetyl-CoA + H2O = (2S)-2-isopropylmalate + CoA + H(+). It functions in the pathway amino-acid biosynthesis; L-leucine biosynthesis; L-leucine from 3-methyl-2-oxobutanoate: step 1/4. In terms of biological role, catalyzes the condensation of the acetyl group of acetyl-CoA with 3-methyl-2-oxobutanoate (2-ketoisovalerate) to form 3-carboxy-3-hydroxy-4-methylpentanoate (2-isopropylmalate). This is 2-isopropylmalate synthase from Pseudoalteromonas atlantica (strain T6c / ATCC BAA-1087).